Here is a 139-residue protein sequence, read N- to C-terminus: Endoribonuclease YbeY (139 aa).

Zn(2+) is bound by residues H110, H114, and H120.

Belongs to the endoribonuclease YbeY family. Zn(2+) is required as a cofactor.

Its subcellular location is the cytoplasm. Single strand-specific metallo-endoribonuclease involved in late-stage 70S ribosome quality control and in maturation of the 3' terminus of the 16S rRNA. The chain is Endoribonuclease YbeY from Thermus thermophilus (strain ATCC BAA-163 / DSM 7039 / HB27).